Here is a 118-residue protein sequence, read N- to C-terminus: V-type proton ATPase subunit G 3 (118 aa).

The segment covering 1 to 12 (MTSQSQGIQQLL) has biased composition (polar residues). The interval 1-44 (MTSQSQGIQQLLQAEKRAKDKLDEAKKRKGKRLRQAKEEAVAET) is disordered. The stretch at 5 to 53 (SQGIQQLLQAEKRAKDKLDEAKKRKGKRLRQAKEEAVAETDQYRMQMEK) forms a coiled coil. The span at 14–26 (AEKRAKDKLDEAK) shows a compositional bias: basic and acidic residues.

Belongs to the V-ATPase G subunit family. As to quaternary structure, V-ATPase is a heteromultimeric enzyme made up of two complexes: the ATP-hydrolytic V1 complex and the proton translocation V0 complex. The V1 complex consists of three catalytic AB heterodimers that form a heterohexamer, three peripheral stalks each consisting of EG heterodimers, one central rotor including subunits D and F, and the regulatory subunits C and H. The proton translocation complex V0 consists of the proton transport subunit a, a ring of proteolipid subunits c9c'', rotary subunit d, subunits e and f, and the accessory subunits ATP6AP1/Ac45 and ATP6AP2/PRR. Kidney.

Its function is as follows. Subunit of the V1 complex of vacuolar(H+)-ATPase (V-ATPase), a multisubunit enzyme composed of a peripheral complex (V1) that hydrolyzes ATP and a membrane integral complex (V0) that translocates protons. V-ATPase is responsible for acidifying and maintaining the pH of intracellular compartments and in some cell types, is targeted to the plasma membrane, where it is responsible for acidifying the extracellular environment. This chain is V-type proton ATPase subunit G 3 (Atp6v1g3), found in Mus musculus (Mouse).